The sequence spans 652 residues: DNA ligase (652 aa).

Residues 29 to 33 (DSQYD), 78 to 79 (SL), and Glu-107 contribute to the NAD(+) site. The N6-AMP-lysine intermediate role is filled by Lys-109. NAD(+) is bound by residues Arg-130, Glu-164, Lys-278, and Lys-302. Residues Cys-395, Cys-398, Cys-413, and Cys-418 each contribute to the Zn(2+) site. The 76-residue stretch at 577–652 (STDAQLSGLT…IQDEDWLLNL (76 aa)) folds into the BRCT domain.

Belongs to the NAD-dependent DNA ligase family. LigA subfamily. Mg(2+) serves as cofactor. The cofactor is Mn(2+).

The enzyme catalyses NAD(+) + (deoxyribonucleotide)n-3'-hydroxyl + 5'-phospho-(deoxyribonucleotide)m = (deoxyribonucleotide)n+m + AMP + beta-nicotinamide D-nucleotide.. DNA ligase that catalyzes the formation of phosphodiester linkages between 5'-phosphoryl and 3'-hydroxyl groups in double-stranded DNA using NAD as a coenzyme and as the energy source for the reaction. It is essential for DNA replication and repair of damaged DNA. This Streptococcus agalactiae serotype III (strain NEM316) protein is DNA ligase.